The primary structure comprises 327 residues: Probable 6-phosphogluconolactonase 3, chloroplastic (327 aa).

Composition is skewed to low complexity over residues 1–29 and 43–66; these read MSASAAVSSTCAAASSTTSRRSSSSPASR and VASRTSPRSPVVPPVYATASPGGA. Residues 1–66 are disordered; sequence MSASAAVSST…VYATASPGGA (66 aa). Residues 1–71 constitute a chloroplast transit peptide; the sequence is MSASAAVSST…SPGGAGGTTA (71 aa).

It belongs to the glucosamine/galactosamine-6-phosphate isomerase family. 6-phosphogluconolactonase subfamily.

Its subcellular location is the plastid. It localises to the chloroplast. It carries out the reaction 6-phospho-D-glucono-1,5-lactone + H2O = 6-phospho-D-gluconate + H(+). It functions in the pathway carbohydrate degradation; pentose phosphate pathway; D-ribulose 5-phosphate from D-glucose 6-phosphate (oxidative stage): step 2/3. Hydrolysis of 6-phosphogluconolactone to 6-phosphogluconate. The protein is Probable 6-phosphogluconolactonase 3, chloroplastic of Oryza sativa subsp. indica (Rice).